Consider the following 105-residue polypeptide: uncharacterized protein (105 aa).

This is an uncharacterized protein from Orgyia pseudotsugata multicapsid polyhedrosis virus (OpMNPV).